The chain runs to 84 residues: Toxin Tst1 (84 aa).

The N-terminal stretch at 1 to 19 (MKGMILFISCLLLIDIVVG) is a signal peptide. One can recognise an LCN-type CS-alpha/beta domain in the interval 21-82 (KEGYLMDHEG…VWDRATNKCG (62 aa)). Disulfide bonds link cysteine 31–cysteine 81, cysteine 35–cysteine 57, cysteine 43–cysteine 62, and cysteine 47–cysteine 64. Cysteine 81 is subject to Cysteine amide.

As to expression, expressed by the venom gland.

Its subcellular location is the secreted. Beta toxins bind voltage-independently at site-4 of sodium channels (Nav) and shift the voltage of activation toward more negative potentials thereby affecting sodium channel activation and promoting spontaneous and repetitive firing. This toxin is active only on mammals. Is toxic to mice. The polypeptide is Toxin Tst1 (Tityus stigmurus (Brazilian scorpion)).